Here is a 345-residue protein sequence, read N- to C-terminus: AA9 family lytic polysaccharide monooxygenase D (345 aa).

The signal sequence occupies residues 1-21; the sequence is MPSFTSKTLLAALAGAAAVNA. The Cu(2+) site is built by histidine 22 and histidine 107. A disulfide bridge connects residues cysteine 77 and cysteine 200. The N-linked (GlcNAc...) asparagine glycan is linked to asparagine 160. Residues histidine 186 and glutamine 195 each coordinate O2. Tyrosine 197 provides a ligand contact to Cu(2+). Residues 315-345 are disordered; that stretch reads VQTSTRPISTRPQPTRCPGLGRRHLRKVARA. Polar residues predominate over residues 318–327; that stretch reads STRPISTRPQ. The span at 335 to 345 shows a compositional bias: basic residues; the sequence is GRRHLRKVARA.

The protein belongs to the polysaccharide monooxygenase AA9 family. It depends on Cu(2+) as a cofactor.

It is found in the secreted. It carries out the reaction [(1-&gt;4)-beta-D-glucosyl]n+m + reduced acceptor + O2 = 4-dehydro-beta-D-glucosyl-[(1-&gt;4)-beta-D-glucosyl]n-1 + [(1-&gt;4)-beta-D-glucosyl]m + acceptor + H2O.. Its function is as follows. Lytic polysaccharide monooxygenase (LPMO) that depolymerizes crystalline and amorphous polysaccharides via the oxidation of scissile alpha- or beta-(1-4)-glycosidic bonds, yielding C1 or C4 oxidation products. Catalysis by LPMOs requires the reduction of the active-site copper from Cu(II) to Cu(I) by a reducing agent and H(2)O(2) or O(2) as a cosubstrate. This chain is AA9 family lytic polysaccharide monooxygenase D, found in Podospora anserina (strain S / ATCC MYA-4624 / DSM 980 / FGSC 10383) (Pleurage anserina).